The chain runs to 190 residues: Xanthine phosphoribosyltransferase (190 aa).

Xanthine is bound by residues Leu20 and Asn27. Position 129-133 (Ala129–Ala133) interacts with 5-phospho-alpha-D-ribose 1-diphosphate. Lys157 provides a ligand contact to xanthine.

Belongs to the purine/pyrimidine phosphoribosyltransferase family. Xpt subfamily. In terms of assembly, homodimer.

The protein resides in the cytoplasm. It carries out the reaction XMP + diphosphate = xanthine + 5-phospho-alpha-D-ribose 1-diphosphate. It functions in the pathway purine metabolism; XMP biosynthesis via salvage pathway; XMP from xanthine: step 1/1. In terms of biological role, converts the preformed base xanthine, a product of nucleic acid breakdown, to xanthosine 5'-monophosphate (XMP), so it can be reused for RNA or DNA synthesis. This is Xanthine phosphoribosyltransferase from Clostridioides difficile (strain 630) (Peptoclostridium difficile).